Here is a 454-residue protein sequence, read N- to C-terminus: UDP-N-acetylmuramate--L-alanine ligase (454 aa).

113-119 lines the ATP pocket; it reads GSHGKTT.

The protein belongs to the MurCDEF family.

It is found in the cytoplasm. It catalyses the reaction UDP-N-acetyl-alpha-D-muramate + L-alanine + ATP = UDP-N-acetyl-alpha-D-muramoyl-L-alanine + ADP + phosphate + H(+). Its pathway is cell wall biogenesis; peptidoglycan biosynthesis. Its function is as follows. Cell wall formation. The polypeptide is UDP-N-acetylmuramate--L-alanine ligase (Sulfurihydrogenibium sp. (strain YO3AOP1)).